We begin with the raw amino-acid sequence, 330 residues long: Heat-inducible transcription repressor HrcA (330 aa).

This sequence belongs to the HrcA family.

In terms of biological role, negative regulator of class I heat shock genes (grpE-dnaK-dnaJ and groELS operons). Prevents heat-shock induction of these operons. This is Heat-inducible transcription repressor HrcA from Synechococcus sp. (strain RCC307).